Here is a 376-residue protein sequence, read N- to C-terminus: Ribonucleoside-diphosphate reductase subunit beta (376 aa).

Residues aspartate 85, glutamate 116, and histidine 119 each coordinate Fe cation. Tyrosine 123 is a catalytic residue. Fe cation is bound by residues glutamate 205, glutamate 239, and histidine 242.

It belongs to the ribonucleoside diphosphate reductase small chain family. In terms of assembly, tetramer of two alpha and two beta subunits. Fe cation is required as a cofactor.

The catalysed reaction is a 2'-deoxyribonucleoside 5'-diphosphate + [thioredoxin]-disulfide + H2O = a ribonucleoside 5'-diphosphate + [thioredoxin]-dithiol. In terms of biological role, provides the precursors necessary for DNA synthesis. Catalyzes the biosynthesis of deoxyribonucleotides from the corresponding ribonucleotides. The sequence is that of Ribonucleoside-diphosphate reductase subunit beta (nrdB) from Buchnera aphidicola subsp. Acyrthosiphon pisum (strain APS) (Acyrthosiphon pisum symbiotic bacterium).